The primary structure comprises 93 residues: Small ribosomal subunit protein bS20c (93 aa).

It belongs to the bacterial ribosomal protein bS20 family.

It localises to the plastid. Its subcellular location is the chloroplast. Binds directly to 16S ribosomal RNA. This chain is Small ribosomal subunit protein bS20c, found in Thalassiosira pseudonana (Marine diatom).